The chain runs to 366 residues: Palmitoyltransferase ZDHHC2 (366 aa).

The Cytoplasmic segment spans residues 1-15 (MAPSGSGGVRRRCRR). A helical transmembrane segment spans residues 16-36 (VLYWIPVVFISLLLGWSYYAY). Residues 37–47 (AIQLCIVSMEN) are Lumenal-facing. The chain crosses the membrane as a helical span at residues 48-68 (IGEQVVCLMAYHLLFAMFVWS). Topologically, residues 69–169 (YWKTIFTLPM…NNCVGFSNYK (101 aa)) are cytoplasmic. One can recognise a DHHC domain in the interval 126–176 (RYCDRCQLIKPDRCHHCSVCDKCILKMDHHCPWVNNCVGFSNYKFFLLFLA). The active-site S-palmitoyl cysteine intermediate is the Cys-156. The chain crosses the membrane as a helical span at residues 170 to 190 (FFLLFLAYSLLYCLFIAATDL). Residues 191-207 (QYFIRFWTNGLPDTQAK) lie on the Lumenal side of the membrane. A helical transmembrane segment spans residues 208 to 228 (FHIMFLFFAAAMFSVSLSSLF). Residues 229–366 (GYHCWLVSKN…NPALTMENET (138 aa)) lie on the Cytoplasmic side of the membrane. The span at 297–316 (VNQDPEQPSTPAGLNSTVKN) shows a compositional bias: polar residues. The tract at residues 297–366 (VNQDPEQPST…NPALTMENET (70 aa)) is disordered. Residues 298 to 366 (NQDPEQPSTP…NPALTMENET (69 aa)) are mediates localization to plasma membrane and recycling endosomes. A compositionally biased stretch (basic and acidic residues) spans 326 to 336 (PLRESQSHLLK). Residues 334-335 (LL) carry the Non-canonical dileucine endocytic signal motif. Polar residues predominate over residues 337 to 347 (DSQTWTESSAN). The short motif at 357–360 (NPAL) is the NPxY-like endocytic signal element.

Belongs to the DHHC palmitoyltransferase family. As to quaternary structure, monomer. Homodimer. The monomeric form has a higher catalytic activity. Autopalmitoylated. Expressed in all brain regions.

It localises to the postsynaptic density. It is found in the postsynaptic recycling endosome membrane. The protein localises to the cell membrane. Its subcellular location is the endoplasmic reticulum membrane. The protein resides in the golgi apparatus membrane. It carries out the reaction L-cysteinyl-[protein] + hexadecanoyl-CoA = S-hexadecanoyl-L-cysteinyl-[protein] + CoA. The enzyme catalyses L-cysteinyl-[protein] + tetradecanoyl-CoA = S-tetradecanoyl-L-cysteinyl-[protein] + CoA. The catalysed reaction is L-cysteinyl-[protein] + octadecanoyl-CoA = S-octadecanoyl-L-cysteinyl-[protein] + CoA. Its function is as follows. Palmitoyltransferase that catalyzes the addition of palmitate onto various protein substrates and is involved in a variety of cellular processes. Has no stringent fatty acid selectivity and in addition to palmitate can also transfer onto target proteins myristate from tetradecanoyl-CoA and stearate from octadecanoyl-CoA. In the nervous system, plays a role in long term synaptic potentiation by palmitoylating AKAP5 through which it regulates protein trafficking from the dendritic recycling endosomes to the plasma membrane and controls both structural and functional plasticity at excitatory synapses. In dendrites, mediates the palmitoylation of DLG4 when synaptic activity decreases and induces synaptic clustering of DLG4 and associated AMPA-type glutamate receptors. Also mediates the de novo and turnover palmitoylation of RGS7BP, a shuttle for Gi/o-specific GTPase-activating proteins/GAPs, promoting its localization to the plasma membrane in response to the activation of G protein-coupled receptors. Through the localization of these GTPase-activating proteins/GAPs, it also probably plays a role in G protein-coupled receptors signaling in neurons. Also probably plays a role in cell adhesion by palmitoylating CD9 and CD151 to regulate their expression and function. Palmitoylates the endoplasmic reticulum protein CKAP4 and regulates its localization to the plasma membrane. Could also palmitoylate LCK and regulate its localization to the plasma membrane. This is Palmitoyltransferase ZDHHC2 from Mus musculus (Mouse).